The sequence spans 320 residues: Malate dehydrogenase (320 aa).

NAD(+) contacts are provided by residues 10–15 (GSGMIG) and D34. The substrate site is built by R83 and R89. NAD(+)-binding positions include N96 and 119–121 (ITN). N121 and R152 together coordinate substrate. H176 acts as the Proton acceptor in catalysis.

Belongs to the LDH/MDH superfamily. MDH type 3 family.

The catalysed reaction is (S)-malate + NAD(+) = oxaloacetate + NADH + H(+). Catalyzes the reversible oxidation of malate to oxaloacetate. The polypeptide is Malate dehydrogenase (Brucella melitensis biotype 2 (strain ATCC 23457)).